We begin with the raw amino-acid sequence, 95 residues long: Protein TusB (95 aa).

This sequence belongs to the DsrH/TusB family. Heterohexamer, formed by a dimer of trimers. The hexameric TusBCD complex contains 2 copies each of TusB, TusC and TusD. The TusBCD complex interacts with TusE.

It localises to the cytoplasm. Its function is as follows. Part of a sulfur-relay system required for 2-thiolation of 5-methylaminomethyl-2-thiouridine (mnm(5)s(2)U) at tRNA wobble positions. This Erwinia tasmaniensis (strain DSM 17950 / CFBP 7177 / CIP 109463 / NCPPB 4357 / Et1/99) protein is Protein TusB.